The chain runs to 233 residues: 2,3,4,5-tetrahydropyridine-2,6-dicarboxylate N-acetyltransferase (233 aa).

Belongs to the transferase hexapeptide repeat family. DapH subfamily.

The catalysed reaction is (S)-2,3,4,5-tetrahydrodipicolinate + acetyl-CoA + H2O = L-2-acetamido-6-oxoheptanedioate + CoA. Its pathway is amino-acid biosynthesis; L-lysine biosynthesis via DAP pathway; LL-2,6-diaminopimelate from (S)-tetrahydrodipicolinate (acetylase route): step 1/3. In terms of biological role, catalyzes the transfer of an acetyl group from acetyl-CoA to tetrahydrodipicolinate. This Petrotoga mobilis (strain DSM 10674 / SJ95) protein is 2,3,4,5-tetrahydropyridine-2,6-dicarboxylate N-acetyltransferase.